Here is a 598-residue protein sequence, read N- to C-terminus: uncharacterized protein (598 aa).

A compositionally biased stretch (basic and acidic residues) spans 1 to 23 (MSHEGSRQARDRGVTRSKAEKAR). Disordered regions lie at residues 1 to 32 (MSHE…VPQV), 151 to 190 (FHNE…VTPR), and 222 to 241 (PSKE…SPQS). A compositionally biased stretch (basic and acidic residues) spans 225 to 235 (ESLRSTAEGER). A phosphoserine mark is found at serine 238 and serine 242. Disordered stretches follow at residues 366-396 (RRSQ…SSPR) and 551-571 (AEEG…VSKP). Composition is skewed to polar residues over residues 369–386 (QAGT…SSRA) and 558–569 (APEQQPIQTGVS).

This is an uncharacterized protein from Mus musculus (Mouse).